The primary structure comprises 186 residues: TATA-box-binding protein 2 (186 aa).

Tandem repeats lie at residues 10–86 (IQNV…FDKL) and 101–179 (VQNI…VERI). Glycyl lysine isopeptide (Lys-Gly) (interchain with G-Cter in SAMP2) cross-links involve residues lysine 53 and lysine 63.

It belongs to the TBP family.

General factor that plays a role in the activation of archaeal genes transcribed by RNA polymerase. Binds specifically to the TATA box promoter element which lies close to the position of transcription initiation. The chain is TATA-box-binding protein 2 (tbp2) from Haloferax volcanii (strain ATCC 29605 / DSM 3757 / JCM 8879 / NBRC 14742 / NCIMB 2012 / VKM B-1768 / DS2) (Halobacterium volcanii).